A 298-amino-acid polypeptide reads, in one-letter code: MRQRTIERSVEVVGIGLHKGVPVTMRLEPLEENSGILFYRKDKNRYIELKPQNVVDTKMATVIGKDGVVISTIEHLMSAVYGYGIDNLLIILDNDEVPIMDGSAISYCMLLDEAGIMEQKSTKKVLRIKNEVEVRDGDKYVRLKPADTLSFDFTIHFDHPVIGKEHYHFEFSKKNFLEEIARARTFGFLHEVQYLRSIGLAQGGSLDNAIVLDEKKILNPDGLRFEDEFVRHKILDAIGDLSLLGMPVMGLYESFAGSHHLNHLLTVKLLEECSNYEIVEASTTTQEGYVIGAACAKE.

Residues His75, His232, and Asp236 each coordinate Zn(2+). His259 functions as the Proton donor in the catalytic mechanism.

This sequence belongs to the LpxC family. It depends on Zn(2+) as a cofactor.

The enzyme catalyses a UDP-3-O-[(3R)-3-hydroxyacyl]-N-acetyl-alpha-D-glucosamine + H2O = a UDP-3-O-[(3R)-3-hydroxyacyl]-alpha-D-glucosamine + acetate. Its pathway is glycolipid biosynthesis; lipid IV(A) biosynthesis; lipid IV(A) from (3R)-3-hydroxytetradecanoyl-[acyl-carrier-protein] and UDP-N-acetyl-alpha-D-glucosamine: step 2/6. Catalyzes the hydrolysis of UDP-3-O-myristoyl-N-acetylglucosamine to form UDP-3-O-myristoylglucosamine and acetate, the committed step in lipid A biosynthesis. In Nitratiruptor sp. (strain SB155-2), this protein is UDP-3-O-acyl-N-acetylglucosamine deacetylase.